We begin with the raw amino-acid sequence, 413 residues long: Arginine biosynthesis bifunctional protein ArgJ (413 aa).

Substrate is bound by residues Thr-158, Lys-184, Thr-195, Glu-285, Asn-408, and Ser-413. The Nucleophile role is filled by Thr-195.

The protein belongs to the ArgJ family. Heterotetramer of two alpha and two beta chains.

Its subcellular location is the cytoplasm. It catalyses the reaction N(2)-acetyl-L-ornithine + L-glutamate = N-acetyl-L-glutamate + L-ornithine. The catalysed reaction is L-glutamate + acetyl-CoA = N-acetyl-L-glutamate + CoA + H(+). The protein operates within amino-acid biosynthesis; L-arginine biosynthesis; L-ornithine and N-acetyl-L-glutamate from L-glutamate and N(2)-acetyl-L-ornithine (cyclic): step 1/1. It participates in amino-acid biosynthesis; L-arginine biosynthesis; N(2)-acetyl-L-ornithine from L-glutamate: step 1/4. Catalyzes two activities which are involved in the cyclic version of arginine biosynthesis: the synthesis of N-acetylglutamate from glutamate and acetyl-CoA as the acetyl donor, and of ornithine by transacetylation between N(2)-acetylornithine and glutamate. The chain is Arginine biosynthesis bifunctional protein ArgJ from Rhizobium meliloti (strain 1021) (Ensifer meliloti).